The primary structure comprises 150 residues: Ribosome maturation factor RimP (150 aa).

This sequence belongs to the RimP family.

It localises to the cytoplasm. Its function is as follows. Required for maturation of 30S ribosomal subunits. The sequence is that of Ribosome maturation factor RimP from Thermotoga sp. (strain RQ2).